The chain runs to 282 residues: Probable xyloglucan endotransglucosylase/hydrolase protein 18 (282 aa).

The first 26 residues, 1 to 26 (MKLSCGTSFAFLIMFLFAAQSMHVYA), serve as a signal peptide directing secretion. One can recognise a GH16 domain in the interval 27–218 (GSFHKDVQIH…WSKAPFTAFY (192 aa)). The Nucleophile role is filled by Glu-104. Glu-108 (proton donor) is an active-site residue. Glu-108 lines the xyloglucan pocket. An N-linked (GlcNAc...) asparagine glycan is attached at Asn-112. Xyloglucan-binding positions include 121–123 (HTN), 131–133 (DKE), 197–198 (HW), and Gly-202. A disulfide bridge links Cys-226 with Cys-235. The N-linked (GlcNAc...) asparagine glycan is linked to Asn-238. Cysteines 267 and 281 form a disulfide. Arg-272 lines the xyloglucan pocket.

This sequence belongs to the glycosyl hydrolase 16 family. XTH group 2 subfamily. Contains at least one intrachain disulfide bond essential for its enzymatic activity. In terms of tissue distribution, root specific.

It localises to the secreted. Its subcellular location is the cell wall. It is found in the extracellular space. The protein localises to the apoplast. The catalysed reaction is breaks a beta-(1-&gt;4) bond in the backbone of a xyloglucan and transfers the xyloglucanyl segment on to O-4 of the non-reducing terminal glucose residue of an acceptor, which can be a xyloglucan or an oligosaccharide of xyloglucan.. Functionally, catalyzes xyloglucan endohydrolysis (XEH) and/or endotransglycosylation (XET). Cleaves and religates xyloglucan polymers, an essential constituent of the primary cell wall, and thereby participates in cell wall construction of growing tissues. In Arabidopsis thaliana (Mouse-ear cress), this protein is Probable xyloglucan endotransglucosylase/hydrolase protein 18 (XTH18).